The primary structure comprises 430 residues: Serine--tRNA ligase (430 aa).

Position 237–239 (237–239 (TAE)) interacts with L-serine. 268-270 (RSE) contacts ATP. An L-serine-binding site is contributed by Glu-291. 355-358 (EISS) serves as a coordination point for ATP. Ser-391 contributes to the L-serine binding site.

The protein belongs to the class-II aminoacyl-tRNA synthetase family. Type-1 seryl-tRNA synthetase subfamily. In terms of assembly, homodimer. The tRNA molecule binds across the dimer.

The protein resides in the cytoplasm. The catalysed reaction is tRNA(Ser) + L-serine + ATP = L-seryl-tRNA(Ser) + AMP + diphosphate + H(+). The enzyme catalyses tRNA(Sec) + L-serine + ATP = L-seryl-tRNA(Sec) + AMP + diphosphate + H(+). Its pathway is aminoacyl-tRNA biosynthesis; selenocysteinyl-tRNA(Sec) biosynthesis; L-seryl-tRNA(Sec) from L-serine and tRNA(Sec): step 1/1. In terms of biological role, catalyzes the attachment of serine to tRNA(Ser). Is also able to aminoacylate tRNA(Sec) with serine, to form the misacylated tRNA L-seryl-tRNA(Sec), which will be further converted into selenocysteinyl-tRNA(Sec). This is Serine--tRNA ligase from Salmonella enteritidis PT4 (strain P125109).